The chain runs to 580 residues: Mucolipin-1 (580 aa).

Residues 1–38 form a disordered region; the sequence is MATPAGRRASETERLLTPNPGYGTQVGTSPAPTTPTEE. At 1 to 65 the chain is on the cytoplasmic side; that stretch reads MATPAGRRAS…FRAKGRKPCK (65 aa). Residue serine 10 is modified to Phosphoserine. Residues 11-16 carry the Dileucine motif; mediates targeting to lysosomes motif; it reads ETERLL. The interaction with phosphoinositides stretch occupies residues 42-62; the sequence is RRRLKYFFMSPCDKFRAKGRK. The helical transmembrane segment at 66–86 threads the bilayer; the sequence is LMLQVVKILVVTVQLILFGLS. Residues 87 to 298 lie on the Extracellular side of the membrane; that stretch reads NQLVVTFREE…VSRHGDNSFR (212 aa). Residues 107-121 form an extracellular/lumenal pore loop region; sequence LGYSDGSDDTFAAYT. The cysteines at positions 166 and 192 are disulfide-linked. 2 N-linked (GlcNAc...) asparagine glycosylation sites follow: asparagine 220 and asparagine 230. Cysteine 253 and cysteine 284 are disulfide-bonded. The chain crosses the membrane as a helical span at residues 299 to 321; the sequence is LLFDVVVILTCSLSFLLCARSLL. Over 322–350 the chain is Cytoplasmic; that stretch reads RGFLLQNEFVVFMWRRRGREISLWERLEF. A helical transmembrane segment spans residues 351–371; the sequence is VNGWYILLVTSDVLTISGTVM. Topologically, residues 372 to 382 are extracellular; it reads KIGIEAKNLAS. Residues 383–405 form a helical membrane-spanning segment; that stretch reads YDVCSILLGTSTLLVWVGVIRYL. The Cytoplasmic portion of the chain corresponds to 406–427; sequence TFFHKYNILIATLRVALPSVMR. The chain crosses the membrane as a helical span at residues 428-448; sequence FCCCVAVIYLGYCFCGWIVLG. Residues 449-456 are Extracellular-facing; that stretch reads PYHVKFRS. An intramembrane region (pore-forming) is located at residues 457–477; it reads LSMVSECLFSLINGDDMFVTF. The Selectivity filter signature appears at 469–474; sequence NGDDMF. Residues 478–491 are Extracellular-facing; the sequence is AAMQAQQGHSSLVW. The chain crosses the membrane as a helical span at residues 492-513; that stretch reads LFSQLYLYSFISLFIYMVLSLF. Residues 514 to 580 are Cytoplasmic-facing; the sequence is IALITGAYDT…SPEDHSLLVN (67 aa). At serine 557 the chain carries Phosphoserine. At serine 559 the chain carries Phosphoserine; by PAK. Residues 565–567 are required for palmitoylation and association with membranes; it reads CCC. Positions 573 to 578 match the Dileucine internalization motif; mediates AP2 complex-dependent internalization motif; the sequence is EDHSLL.

This sequence belongs to the transient receptor (TC 1.A.4) family. Polycystin subfamily. MCOLN1 sub-subfamily. Homotetramer. Homooligomer. Can heterooligomerize with MCOLN2 or MCOLN3; heteromeric assemblies have different channel properties as compared to the respective homooligomers and may be tissue-specific. Interacts with PDCD6. Interacts with TMEM163. Interacts with LAPTM4B. Palmitoylated; involved in association with membranes. Post-translationally, phosphorylation by PKA inhibits channel activity. Dephosphorylation increases activity. In terms of processing, proteolytically cleaved probably involving multiple lysosomal proteases including cathepsin B; inhibits lysosomal channel activity. As to expression, widely expressed, with the highest expression in brain, liver and kidney.

It is found in the late endosome membrane. Its subcellular location is the lysosome membrane. The protein localises to the cytoplasmic vesicle membrane. It localises to the cell projection. The protein resides in the phagocytic cup. It is found in the cytoplasmic vesicle. Its subcellular location is the phagosome membrane. The protein localises to the cell membrane. It carries out the reaction Ca(2+)(in) = Ca(2+)(out). The enzyme catalyses Fe(2+)(in) = Fe(2+)(out). The catalysed reaction is Mg(2+)(in) = Mg(2+)(out). It catalyses the reaction K(+)(in) = K(+)(out). It carries out the reaction Na(+)(in) = Na(+)(out). With respect to regulation, channel activity is controlled by multiple regulatory mechanisms in different subcellular compartments. Lower pH by itself has an inhibitory effect on channel conductance. Channel function is transiently modulated by changes in Ca(2+) in a pH-dependent manner; pH changes modify the aggregation state of unitary channels; a negative cooperativity between extracellular/lumenal Ca(2+) and H(+) is suggested. Fe(2+) channel activity is potentiated by low pH. Regulated by phosphoinositides in a compartment-specific manner: in lysosomes activated by PtdIns(3,5)P2 (Phosphatidylinositol 3,5-bisphosphate) and at the plasma membrane inhibited by PtdIns(4,5)P2 (Phosphatidylinositol 4,5-bisphosphate). Nonselective cation channel probably playing a role in the regulation of membrane trafficking events and of metal homeostasis. Acts as a Ca(2+)-permeable cation channel with inwardly rectifying activity. Proposed to play a major role in Ca(2+) release from late endosome and lysosome vesicles to the cytoplasm, which is important for many lysosome-dependent cellular events, including the fusion and trafficking of these organelles, exocytosis and autophagy. Required for efficient uptake of large particles in macrophages in which Ca(2+) release from the lysosomes triggers lysosomal exocytosis. May also play a role in phagosome-lysosome fusion. Involved in lactosylceramide trafficking indicative for a role in the regulation of late endocytic membrane fusion/fission events. By mediating lysosomal Ca(2+) release is involved in regulation of mTORC1 signaling and in mTOR/TFEB-dependent lysosomal adaptation to environmental cues such as nutrient levels. Seems to act as lysosomal active oxygen species (ROS) sensor involved in ROS-induced TFEB activation and autophagy. Also functions as a Fe(2+) permeable channel in late endosomes and lysosomes. Also permeable to Mg(2+), Na(+). K(+) and Cs(+). Proposed to play a role in zinc homeostasis probably implicating its association with TMEM163. In adaptive immunity, TRPML2 and TRPML1 may play redundant roles in the function of the specialized lysosomes of B cells. Functionally, may contribute to cellular lipase activity within the late endosomal pathway or at the cell surface which may be involved in processes of membrane reshaping and vesiculation, especially the growth of tubular structures. However, it is not known, whether it conveys the enzymatic activity directly, or merely facilitates the activity of an associated phospholipase. This is Mucolipin-1 from Mus musculus (Mouse).